Consider the following 716-residue polypeptide: Pyruvate/proton symporter BtsT (716 aa).

The Cytoplasmic portion of the chain corresponds to 1–5 (MDTKK). A helical membrane pass occupies residues 6-26 (IFKHIPWVILGIIGAFCLAVV). Over 27 to 30 (ALRR) the chain is Periplasmic. The helical transmembrane segment at 31–51 (GEHISALWIVVASVSVYLVAY) threads the bilayer. Topologically, residues 52 to 88 (RYYSLYIAQKVMKLDPTRATPAVINNDGLNYVPTNRY) are cytoplasmic. The chain crosses the membrane as a helical span at residues 89 to 109 (VLFGHHFAAIAGAGPLVGPVL). At 110–119 (AAQMGYLPGT) the chain is on the periplasmic side. Residues 120–140 (LWLLAGVVLAGAVQDFMVLFI) traverse the membrane as a helical segment. The Cytoplasmic segment spans residues 141-163 (SSRRNGASLGEMIKEEMGPVPGT). Residues 164–184 (IALFGCFLIMIIILAVLALIV) traverse the membrane as a helical segment. Over 185 to 191 (VKALAES) the chain is Periplasmic. The helical transmembrane segment at 192–212 (PWGVFTVCSTVPIALFMGIYM) threads the bilayer. Residues 213-222 (RFIRPGRVGE) are Cytoplasmic-facing. The chain crosses the membrane as a helical span at residues 223–243 (VSVIGIVLLVASIYFGGVIAH). Residues 244–257 (DPYWGPALTFKDTT) are Periplasmic-facing. The chain crosses the membrane as a helical span at residues 258 to 278 (ITFALIGYAFVSALLPVWLIL). The Cytoplasmic segment spans residues 279–282 (APRD). Residues 283 to 303 (YLATFLKIGVIVGLALGIVVL) form a helical membrane-spanning segment. Over 304-326 (NPELKMPAMTQYIDGTGPLWKGA) the chain is Periplasmic. A helical membrane pass occupies residues 327–347 (LFPFLFITIACGAVSGFHALI). Topologically, residues 348 to 374 (SSGTTPKLLANETDARFIGYGAMLMES) are cytoplasmic. A helical membrane pass occupies residues 375–395 (FVAIMALVAASIIEPGLYFAM). At 396 to 484 (NTPPAGLGIT…HVFHKVLPMA (89 aa)) the chain is on the periplasmic side. The helical transmembrane segment at 485–505 (DMGFWYHFGILFEALFILTAL) threads the bilayer. At 506–531 (DAGTRSGRFMLQDLLGNFIPFLKKTD) the chain is on the cytoplasmic side. A helical membrane pass occupies residues 532-552 (SLVAGIIGTAGCVGLWGYLLY). The Periplasmic segment spans residues 553–568 (QGVVDPLGGVKSLWPL). Residues 569-589 (FGISNQMLAAVALVLGTVVLI) traverse the membrane as a helical segment. The Cytoplasmic segment spans residues 590–596 (KMKRTQY). A helical membrane pass occupies residues 597–617 (IWVTVVPAVWLLICTTWALGL). Topologically, residues 618–668 (KLFSTNPQMEGFFYMASQYKEKIANGTDLTAQQIANMNHIVVNNYTNAGLS) are periplasmic. Residues 669 to 689 (ILFLIVVYSIIFYGFKTWLAV) traverse the membrane as a helical segment. At 690-716 (RNSDKRTDKETPYVPIPEGGVKISSHH) the chain is on the cytoplasmic side. A disordered region spans residues 696–716 (TDKETPYVPIPEGGVKISSHH).

It belongs to the peptide transporter carbon starvation (CstA) (TC 2.A.114) family. In terms of assembly, interacts with BtsS and YpdA.

It is found in the cell inner membrane. It carries out the reaction pyruvate(out) + H(+)(out) = pyruvate(in) + H(+)(in). Transport is inhibited by the protonophores 2,4-dinitrophenol (DNP) and carbonyl cyanide m-chlorophenyl hydrazone (CCCP), but not by ionophores such as valinomycin, nonactin and nigericin. Functionally, transports pyruvate with a high affinity and specificity. The process is driven by the proton motive force. Under nutrient limiting conditions, mediates the uptake of pyruvate, thus enabling it to be used as a carbon source for the growth and survival. Part of a nutrient-sensing regulatory network composed of the two-component regulatory systems BtsS/BtsR and YpdA/YpdB, and their respective target proteins, BtsT and YhjX. This Escherichia coli (strain K12) protein is Pyruvate/proton symporter BtsT.